Reading from the N-terminus, the 400-residue chain is Acetate kinase (400 aa).

Asn-9 serves as a coordination point for Mg(2+). Lys-16 serves as a coordination point for ATP. Substrate is bound at residue Arg-90. Asp-147 (proton donor/acceptor) is an active-site residue. ATP-binding positions include 207–211 (HIGNG), 282–284 (DLR), and 330–334 (GIGEN). Position 385 (Glu-385) interacts with Mg(2+).

This sequence belongs to the acetokinase family. In terms of assembly, homodimer. Mg(2+) is required as a cofactor. It depends on Mn(2+) as a cofactor.

It localises to the cytoplasm. The catalysed reaction is acetate + ATP = acetyl phosphate + ADP. It participates in metabolic intermediate biosynthesis; acetyl-CoA biosynthesis; acetyl-CoA from acetate: step 1/2. Its function is as follows. Catalyzes the formation of acetyl phosphate from acetate and ATP. Can also catalyze the reverse reaction. The polypeptide is Acetate kinase (Staphylococcus aureus (strain USA300)).